We begin with the raw amino-acid sequence, 307 residues long: Ribonuclease Z (307 aa).

Positions 63, 65, 67, 68, 140, 211, and 269 each coordinate Zn(2+). The active-site Proton acceptor is aspartate 67.

Belongs to the RNase Z family. In terms of assembly, homodimer. It depends on Zn(2+) as a cofactor.

It carries out the reaction Endonucleolytic cleavage of RNA, removing extra 3' nucleotides from tRNA precursor, generating 3' termini of tRNAs. A 3'-hydroxy group is left at the tRNA terminus and a 5'-phosphoryl group is left at the trailer molecule.. Zinc phosphodiesterase, which displays some tRNA 3'-processing endonuclease activity. Probably involved in tRNA maturation, by removing a 3'-trailer from precursor tRNA. The polypeptide is Ribonuclease Z (Bacillus licheniformis (strain ATCC 14580 / DSM 13 / JCM 2505 / CCUG 7422 / NBRC 12200 / NCIMB 9375 / NCTC 10341 / NRRL NRS-1264 / Gibson 46)).